We begin with the raw amino-acid sequence, 441 residues long: Arginine biosynthesis bifunctional protein ArgJ, mitochondrial (441 aa).

Residues threonine 177, lysine 204, threonine 215, glutamate 301, asparagine 436, and serine 441 each contribute to the substrate site. Threonine 215 acts as the Nucleophile in catalysis.

This sequence belongs to the ArgJ family. Heterodimer of an alpha and a beta chain. Post-translationally, the alpha and beta chains are autoproteolytically processed from a single precursor protein within the mitochondrion.

The protein resides in the mitochondrion matrix. It carries out the reaction N(2)-acetyl-L-ornithine + L-glutamate = N-acetyl-L-glutamate + L-ornithine. It catalyses the reaction L-glutamate + acetyl-CoA = N-acetyl-L-glutamate + CoA + H(+). It participates in amino-acid biosynthesis; L-arginine biosynthesis; L-ornithine and N-acetyl-L-glutamate from L-glutamate and N(2)-acetyl-L-ornithine (cyclic): step 1/1. The protein operates within amino-acid biosynthesis; L-arginine biosynthesis; N(2)-acetyl-L-ornithine from L-glutamate: step 1/4. Its function is as follows. Catalyzes two activities which are involved in the cyclic version of arginine biosynthesis: the synthesis of acetylglutamate from glutamate and acetyl-CoA, and of ornithine by transacetylation between acetylornithine and glutamate. This chain is Arginine biosynthesis bifunctional protein ArgJ, mitochondrial, found in Kluyveromyces lactis (strain ATCC 8585 / CBS 2359 / DSM 70799 / NBRC 1267 / NRRL Y-1140 / WM37) (Yeast).